A 249-amino-acid polypeptide reads, in one-letter code: Triosephosphate isomerase (249 aa).

Residues Asn-10 and Lys-12 each coordinate substrate. His-94 acts as the Electrophile in catalysis. Glu-166 (proton acceptor) is an active-site residue.

Belongs to the triosephosphate isomerase family. As to quaternary structure, homodimer.

The enzyme catalyses D-glyceraldehyde 3-phosphate = dihydroxyacetone phosphate. Its pathway is carbohydrate biosynthesis; gluconeogenesis. It participates in carbohydrate degradation; glycolysis; D-glyceraldehyde 3-phosphate from glycerone phosphate: step 1/1. The protein is Triosephosphate isomerase (tpiA) of Emericella nidulans (strain FGSC A4 / ATCC 38163 / CBS 112.46 / NRRL 194 / M139) (Aspergillus nidulans).